The following is a 256-amino-acid chain: uncharacterized protein (256 aa).

Positions 187 to 223 (MEEEEISEVEDALNVLQRLCAQEEGDNKEAETNNNNY) form a coiled coil.

This is an uncharacterized protein from Ostreid herpesvirus 1 (isolate France) (OsHV-1).